Consider the following 338-residue polypeptide: Elongation factor Ts, mitochondrial (338 aa).

The transit peptide at 1-55 (MSLLRSLRLCLVARTGSCPLSALGPGPLLPSLQAGLPLLQSPQQWHTFHSGSWLS) directs the protein to the mitochondrion. Residues Lys-89, Lys-146, and Lys-205 each carry the N6-succinyllysine modification. Ser-283 bears the Phosphoserine mark.

The protein belongs to the EF-Ts family.

The protein localises to the mitochondrion. Its function is as follows. Associates with the EF-Tu.GDP complex and induces the exchange of GDP to GTP. It remains bound to the aminoacyl-tRNA.EF-Tu.GTP complex up to the GTP hydrolysis stage on the ribosome. The protein is Elongation factor Ts, mitochondrial of Bos taurus (Bovine).